Consider the following 281-residue polypeptide: MKDKIFIFLQYIIPHSLTSRLVSKLAESKNKHLKNYLINLAIKKFKIDISEAKETDINKYTSFNNFFIRELKDGLRPISSDKKIISSPADGVLSEFGDITNGSLVQAKGKTFTLKALIADSSTTDFTKFATIYLSPKDYHRVHMPIDGKLTKMVYIPGKLFSVNKVTAQNVDDLFAKNERLVCYFKTEIGEVAVIFVGALLVAGIETVWHGKVAPNYYKDIQIWNYDNDSFNIEFKKGDTLGWFNFGSTVIILMPNNNISFKYNQSNANISVNQDLALIAE.

Catalysis depends on charge relay system; for autoendoproteolytic cleavage activity residues Asp-90, His-143, and Ser-248. Residue Ser-248 is the Schiff-base intermediate with substrate; via pyruvic acid; for decarboxylase activity of the active site. Residue Ser-248 is modified to Pyruvic acid (Ser); by autocatalysis.

Belongs to the phosphatidylserine decarboxylase family. PSD-B subfamily. Prokaryotic type I sub-subfamily. In terms of assembly, heterodimer of a large membrane-associated beta subunit and a small pyruvoyl-containing alpha subunit. The cofactor is pyruvate. Is synthesized initially as an inactive proenzyme. Formation of the active enzyme involves a self-maturation process in which the active site pyruvoyl group is generated from an internal serine residue via an autocatalytic post-translational modification. Two non-identical subunits are generated from the proenzyme in this reaction, and the pyruvate is formed at the N-terminus of the alpha chain, which is derived from the carboxyl end of the proenzyme. The autoendoproteolytic cleavage occurs by a canonical serine protease mechanism, in which the side chain hydroxyl group of the serine supplies its oxygen atom to form the C-terminus of the beta chain, while the remainder of the serine residue undergoes an oxidative deamination to produce ammonia and the pyruvoyl prosthetic group on the alpha chain. During this reaction, the Ser that is part of the protease active site of the proenzyme becomes the pyruvoyl prosthetic group, which constitutes an essential element of the active site of the mature decarboxylase.

It localises to the cell membrane. It carries out the reaction a 1,2-diacyl-sn-glycero-3-phospho-L-serine + H(+) = a 1,2-diacyl-sn-glycero-3-phosphoethanolamine + CO2. It participates in phospholipid metabolism; phosphatidylethanolamine biosynthesis; phosphatidylethanolamine from CDP-diacylglycerol: step 2/2. Functionally, catalyzes the formation of phosphatidylethanolamine (PtdEtn) from phosphatidylserine (PtdSer). The sequence is that of Phosphatidylserine decarboxylase proenzyme from Francisella philomiragia subsp. philomiragia (strain ATCC 25017 / CCUG 19701 / FSC 153 / O#319-036).